The primary structure comprises 637 residues: Chaperone protein HtpG (637 aa).

Residues 1 to 345 (MSQQETHGFQ…SNDLPLNVSR (345 aa)) form an a; substrate-binding region. Positions 346–562 (EILQDNHITK…EGEMSTQMIK (217 aa)) are b. Residues 563 to 637 (LMQAAGQPVP…MNQMLLANMK (75 aa)) form a c region.

Belongs to the heat shock protein 90 family. In terms of assembly, homodimer.

It is found in the cytoplasm. In terms of biological role, molecular chaperone. Has ATPase activity. This Shewanella putrefaciens (strain CN-32 / ATCC BAA-453) protein is Chaperone protein HtpG.